The primary structure comprises 175 residues: Shikimate kinase (175 aa).

11 to 16 (GAGKTT) is an ATP binding site. T15 provides a ligand contact to Mg(2+). D33, R57, and G79 together coordinate substrate. R118 serves as a coordination point for ATP. R140 is a binding site for substrate.

Belongs to the shikimate kinase family. Monomer. The cofactor is Mg(2+).

Its subcellular location is the cytoplasm. The catalysed reaction is shikimate + ATP = 3-phosphoshikimate + ADP + H(+). It functions in the pathway metabolic intermediate biosynthesis; chorismate biosynthesis; chorismate from D-erythrose 4-phosphate and phosphoenolpyruvate: step 5/7. Catalyzes the specific phosphorylation of the 3-hydroxyl group of shikimic acid using ATP as a cosubstrate. This Phocaeicola vulgatus (strain ATCC 8482 / DSM 1447 / JCM 5826 / CCUG 4940 / NBRC 14291 / NCTC 11154) (Bacteroides vulgatus) protein is Shikimate kinase.